The sequence spans 156 residues: Perlucin-like protein (156 aa).

The N-terminal stretch at 1–22 (MGKLTVVGILTLFIFYIVAASG) is a signal peptide. 3 cysteine pairs are disulfide-bonded: C30–C41, C58–C156, and C131–C147. Residues 37–156 (YKTNCYFFSP…CNTDQMGYIC (120 aa)) enclose the C-type lectin domain.

Component of the organic matrix of calcified shell layers like nacre and prisms.

The protein localises to the secreted. The chain is Perlucin-like protein from Mytilus galloprovincialis (Mediterranean mussel).